A 387-amino-acid polypeptide reads, in one-letter code: Adaptive-response sensory kinase SasA (387 aa).

Residues 1–97 (MGESLSPQAL…TDQLANQLPQ (97 aa)) are interacts with KaiC. The region spanning 158-382 (LVAHDLRNPL…TFHFTMPVYR (225 aa)) is the Histidine kinase domain. His161 carries the phosphohistidine; by autocatalysis modification.

As to quaternary structure, homooligomerizes. Part of the circadian clock (KaiA, KaiB, KaiC, CikA, RpaA, SasA), the composition of which varies during the circadian cycle. Binds to the CI domain of KaiC; KaiB(fs) and SasA compete for the binding site. Binds preferentially to doubly phosphorylated KaiC. Interacts with LdpA. Autophosphorylates in vitro.

It catalyses the reaction ATP + protein L-histidine = ADP + protein N-phospho-L-histidine.. Functionally, member of the two-component regulatory system SasA/RpaA involved in genome-wide circadian gene expression. One of three clock output pathways. Participates in the KaiABC clock protein complex, which constitutes the main circadian regulator in cyanobacteria, via its interaction with KaiC. Required for robustness of the circadian rhythm of gene expression and involved in clock output. KaiC enhances the autophosphorylation activity of SasA, which then transfers its phosphate group to RpaA to activate it. Phosphotransfer is maximal when KaiC phosphorylation is active during the circadian cycle; this two-component system is activated by fully phosphorylated KaiC. A very robust clock is reconstituted with KaiA, KaiB, KaiC, SasA, CikA and RpaA; output is measured by transcription from an appropriate reporter. In addition to its output function, recruits fold-shifted KaiB (KaiB(fs)) to KaiC to cooperatively form the KaiB(6):KaiC(6) complex (independent of SasA kinase activity); at physiological concentrations increases their association. At higher concentrations SasA and KaiB(fs) compete to bind to KaiC. Mutations that decrease cooperativity nearly phenocopy a deletion mutation. In terms of biological role, autophosphorylation and phosphotransfer activities are not essential for clock rhythms in continuous light, but they are essential for adaptation to light/dark cycles. The sequence is that of Adaptive-response sensory kinase SasA from Synechococcus elongatus (strain ATCC 33912 / PCC 7942 / FACHB-805) (Anacystis nidulans R2).